The primary structure comprises 104 residues: MAKTRRVIYLFLTIVLLFCELIDEAQGSRFRCHHSEDYSCKKRSSHHHHHHHHHQQQQHHHKDTPPEELQGSIKTRRSKDIYGLNAFRSTEPGHSPGVGHLIKT.

Positions 1 to 27 (MAKTRRVIYLFLTIVLLFCELIDEAQG) are cleaved as a signal peptide. A propeptide spanning residues 28-85 (SRFRCHHSEDYSCKKRSSHHHHHHHHHQQQQHHHKDTPPEELQGSIKTRRSKDIYGLN) is cleaved from the precursor. The disordered stretch occupies residues 37–104 (DYSCKKRSSH…SPGVGHLIKT (68 aa)). A compositionally biased stretch (basic residues) spans 41–62 (KKRSSHHHHHHHHHQQQQHHHK). A hydroxyproline mark is found at Pro-92 and Pro-96. Residues 101–104 (LIKT) constitute a propeptide that is removed on maturation.

The protein belongs to the C-terminally encoded plant signaling peptide (CEP) family. In terms of assembly, interacts with CEP receptors (e.g. CEPR1 and CEPR2). Post-translationally, the mature small signaling peptide is generated by proteolytic processing of the longer precursor. In terms of tissue distribution, expressed in lateral root primordia and in lateral roots excluding the meristem region.

The protein localises to the secreted. It is found in the extracellular space. The protein resides in the apoplast. Extracellular signaling peptide that may regulate primary root growth rate and systemic nitrogen (N)-demand signaling. Mediates up-regulation of genes involved in N uptake and assimilation pathways. The chain is Precursor of CEP11 from Arabidopsis thaliana (Mouse-ear cress).